A 134-amino-acid polypeptide reads, in one-letter code: Translation initiation factor 2 subunit beta (134 aa).

Belongs to the eIF-2-beta/eIF-5 family. Heterotrimer composed of an alpha, a beta and a gamma chain.

EIF-2 functions in the early steps of protein synthesis by forming a ternary complex with GTP and initiator tRNA. This is Translation initiation factor 2 subunit beta from Pyrobaculum neutrophilum (strain DSM 2338 / JCM 9278 / NBRC 100436 / V24Sta) (Thermoproteus neutrophilus).